The chain runs to 361 residues: Phenylalanine--tRNA ligase alpha subunit (361 aa).

Glu260 provides a ligand contact to Mg(2+).

It belongs to the class-II aminoacyl-tRNA synthetase family. Phe-tRNA synthetase alpha subunit type 1 subfamily. As to quaternary structure, tetramer of two alpha and two beta subunits. Requires Mg(2+) as cofactor.

Its subcellular location is the cytoplasm. It carries out the reaction tRNA(Phe) + L-phenylalanine + ATP = L-phenylalanyl-tRNA(Phe) + AMP + diphosphate + H(+). The polypeptide is Phenylalanine--tRNA ligase alpha subunit (Bartonella henselae (strain ATCC 49882 / DSM 28221 / CCUG 30454 / Houston 1) (Rochalimaea henselae)).